The sequence spans 914 residues: Protein translocase subunit SecA (914 aa).

Residues Q87, 105–109 (GEGKT), and D508 each bind ATP. Residues C898, C900, C909, and H910 each contribute to the Zn(2+) site.

The protein belongs to the SecA family. Monomer and homodimer. Part of the essential Sec protein translocation apparatus which comprises SecA, SecYEG and auxiliary proteins SecDF-YajC and YidC. The cofactor is Zn(2+).

Its subcellular location is the cell inner membrane. It localises to the cytoplasm. It catalyses the reaction ATP + H2O + cellular proteinSide 1 = ADP + phosphate + cellular proteinSide 2.. Its function is as follows. Part of the Sec protein translocase complex. Interacts with the SecYEG preprotein conducting channel. Has a central role in coupling the hydrolysis of ATP to the transfer of proteins into and across the cell membrane, serving both as a receptor for the preprotein-SecB complex and as an ATP-driven molecular motor driving the stepwise translocation of polypeptide chains across the membrane. The sequence is that of Protein translocase subunit SecA from Xylella fastidiosa (strain M23).